Reading from the N-terminus, the 62-residue chain is uncharacterized protein (62 aa).

The interval 38-62 (VKSESDTADSKRSAEAKADEAPAKM) is disordered.

This is an uncharacterized protein from Schizosaccharomyces pombe (strain 972 / ATCC 24843) (Fission yeast).